A 339-amino-acid polypeptide reads, in one-letter code: 1-aminocyclopropane-1-carboxylate deaminase (339 aa).

At K52 the chain carries N6-(pyridoxal phosphate)lysine. S79 serves as the catalytic Nucleophile.

Belongs to the ACC deaminase/D-cysteine desulfhydrase family. Homotrimer. It depends on pyridoxal 5'-phosphate as a cofactor.

The catalysed reaction is 1-aminocyclopropane-1-carboxylate + H2O = 2-oxobutanoate + NH4(+). Functionally, catalyzes a cyclopropane ring-opening reaction, the irreversible conversion of 1-aminocyclopropane-1-carboxylate (ACC) to ammonia and alpha-ketobutyrate. Allows growth on ACC as a nitrogen source. This is 1-aminocyclopropane-1-carboxylate deaminase from Bradyrhizobium sp. (strain ORS 278).